Here is a 379-residue protein sequence, read N- to C-terminus: Cytochrome b (379 aa).

The next 4 membrane-spanning stretches (helical) occupy residues 33-53, 77-98, 113-133, and 178-198; these read FGSL…FLAM, WLIR…YLHI, WNIG…GYVL, and FFAF…LHLL. Heme b-binding residues include His-83 and His-97. His-182 and His-196 together coordinate heme b. His-201 serves as a coordination point for a ubiquinone. 4 helical membrane passes run 226–246, 288–308, 320–340, and 347–367; these read YKDL…ALFY, LGGV…PILH, ISQL…WIGG, and YIII…VLNP.

Belongs to the cytochrome b family. As to quaternary structure, the cytochrome bc1 complex contains 3 respiratory subunits (MT-CYB, CYC1 and UQCRFS1), 2 core proteins (UQCRC1 and UQCRC2) and probably 6 low-molecular weight proteins. Requires heme b as cofactor.

It is found in the mitochondrion inner membrane. In terms of biological role, component of the ubiquinol-cytochrome c reductase complex (complex III or cytochrome b-c1 complex) that is part of the mitochondrial respiratory chain. The b-c1 complex mediates electron transfer from ubiquinol to cytochrome c. Contributes to the generation of a proton gradient across the mitochondrial membrane that is then used for ATP synthesis. The chain is Cytochrome b (mt-cyb) from Anguilla mossambica (African longfin eel).